Reading from the N-terminus, the 151-residue chain is SsrA-binding protein (151 aa).

The disordered stretch occupies residues 124-151; sequence GKKLHDKRESEKERDWNRQKSRLLKAHG. The segment covering 129-141 has biased composition (basic and acidic residues); the sequence is DKRESEKERDWNR. Residues 142 to 151 are compositionally biased toward basic residues; it reads QKSRLLKAHG.

The protein belongs to the SmpB family.

It localises to the cytoplasm. Its function is as follows. Required for rescue of stalled ribosomes mediated by trans-translation. Binds to transfer-messenger RNA (tmRNA), required for stable association of tmRNA with ribosomes. tmRNA and SmpB together mimic tRNA shape, replacing the anticodon stem-loop with SmpB. tmRNA is encoded by the ssrA gene; the 2 termini fold to resemble tRNA(Ala) and it encodes a 'tag peptide', a short internal open reading frame. During trans-translation Ala-aminoacylated tmRNA acts like a tRNA, entering the A-site of stalled ribosomes, displacing the stalled mRNA. The ribosome then switches to translate the ORF on the tmRNA; the nascent peptide is terminated with the 'tag peptide' encoded by the tmRNA and targeted for degradation. The ribosome is freed to recommence translation, which seems to be the essential function of trans-translation. This chain is SsrA-binding protein, found in Rhizobium johnstonii (strain DSM 114642 / LMG 32736 / 3841) (Rhizobium leguminosarum bv. viciae).